Consider the following 363-residue polypeptide: Phosphoserine aminotransferase (363 aa).

The L-glutamate site is built by Ser-9 and Arg-42. Residues 76–77, Trp-102, Thr-154, Asp-174, and Gln-197 contribute to the pyridoxal 5'-phosphate site; that span reads AR. Lys-198 is subject to N6-(pyridoxal phosphate)lysine. 240-241 contributes to the pyridoxal 5'-phosphate binding site; it reads NT.

Belongs to the class-V pyridoxal-phosphate-dependent aminotransferase family. SerC subfamily. In terms of assembly, homodimer. Requires pyridoxal 5'-phosphate as cofactor.

The protein localises to the cytoplasm. The enzyme catalyses O-phospho-L-serine + 2-oxoglutarate = 3-phosphooxypyruvate + L-glutamate. The catalysed reaction is 4-(phosphooxy)-L-threonine + 2-oxoglutarate = (R)-3-hydroxy-2-oxo-4-phosphooxybutanoate + L-glutamate. Its pathway is amino-acid biosynthesis; L-serine biosynthesis; L-serine from 3-phospho-D-glycerate: step 2/3. It participates in cofactor biosynthesis; pyridoxine 5'-phosphate biosynthesis; pyridoxine 5'-phosphate from D-erythrose 4-phosphate: step 3/5. In terms of biological role, catalyzes the reversible conversion of 3-phosphohydroxypyruvate to phosphoserine and of 3-hydroxy-2-oxo-4-phosphonooxybutanoate to phosphohydroxythreonine. This chain is Phosphoserine aminotransferase, found in Baumannia cicadellinicola subsp. Homalodisca coagulata.